The primary structure comprises 233 residues: Translation initiation factor 6 (233 aa).

Belongs to the eIF-6 family.

In terms of biological role, binds to the 50S ribosomal subunit and prevents its association with the 30S ribosomal subunit to form the 70S initiation complex. In Aeropyrum pernix (strain ATCC 700893 / DSM 11879 / JCM 9820 / NBRC 100138 / K1), this protein is Translation initiation factor 6.